Reading from the N-terminus, the 255-residue chain is 4-hydroxy-tetrahydrodipicolinate reductase (255 aa).

NAD(+) is bound by residues 8–13, 88–90, and 112–115; these read GATGRV, GTT, and ATNM. H144 acts as the Proton donor/acceptor in catalysis. Position 145 (H145) interacts with (S)-2,3,4,5-tetrahydrodipicolinate. The active-site Proton donor is K148. Residue 154-155 participates in (S)-2,3,4,5-tetrahydrodipicolinate binding; it reads GT.

It belongs to the DapB family.

The protein localises to the cytoplasm. It carries out the reaction (S)-2,3,4,5-tetrahydrodipicolinate + NAD(+) + H2O = (2S,4S)-4-hydroxy-2,3,4,5-tetrahydrodipicolinate + NADH + H(+). The catalysed reaction is (S)-2,3,4,5-tetrahydrodipicolinate + NADP(+) + H2O = (2S,4S)-4-hydroxy-2,3,4,5-tetrahydrodipicolinate + NADPH + H(+). It participates in amino-acid biosynthesis; L-lysine biosynthesis via DAP pathway; (S)-tetrahydrodipicolinate from L-aspartate: step 4/4. Functionally, catalyzes the conversion of 4-hydroxy-tetrahydrodipicolinate (HTPA) to tetrahydrodipicolinate. The chain is 4-hydroxy-tetrahydrodipicolinate reductase from Helicobacter hepaticus (strain ATCC 51449 / 3B1).